Reading from the N-terminus, the 430-residue chain is Levansucrase Lscgamma (430 aa).

The sucrose site is built by W60, D61, A147, R217, and D218. The Nucleophile role is filled by D61. E302 (proton donor/acceptor) is an active-site residue.

The protein belongs to the glycosyl hydrolase 68 family. As to quaternary structure, homodimer.

The catalysed reaction is [6)-beta-D-fructofuranosyl-(2-&gt;](n) alpha-D-glucopyranoside + sucrose = [6)-beta-D-fructofuranosyl-(2-&gt;](n+1) alpha-D-glucopyranoside + D-glucose. Its activity is regulated as follows. Sucrose hydrolase activity is negatively affected by salt concentration. The levan polymerization rate increases sharply in relation to sucrose concentration reaching the maximum at 100 mM sucrose, and then steadily decreases, suggesting a strong inhibition of the activity by the substrate. Functionally, catalyzes the synthesis of levan, a fructose polymer, by transferring the fructosyl moiety from sucrose to a growing acceptor molecule. Also displays sucrose hydrolase activity. Can depolymerize the levan produced once substrate is completely exhausted. This Pseudomonas syringae pv. actinidiae protein is Levansucrase Lscgamma.